We begin with the raw amino-acid sequence, 355 residues long: Glucose-1-phosphate thymidylyltransferase (355 aa).

The Mg(2+) site is built by Asp-107 and Asp-220.

It belongs to the glucose-1-phosphate thymidylyltransferase family. It depends on Mg(2+) as a cofactor.

The catalysed reaction is dTTP + alpha-D-glucose 1-phosphate + H(+) = dTDP-alpha-D-glucose + diphosphate. It functions in the pathway antibiotic biosynthesis; streptomycin biosynthesis. Functionally, involved in the biosynthesis of the streptose moiety of streptomycin. Catalyzes the formation of dTDP-glucose, from dTTP and glucose 1-phosphate, as well as its pyrophosphorolysis. The polypeptide is Glucose-1-phosphate thymidylyltransferase (strD) (Streptomyces griseus).